The sequence spans 177 residues: NADH-quinone oxidoreductase subunit B (177 aa).

Residues Cys-53, Cys-54, Cys-118, and Cys-148 each coordinate [4Fe-4S] cluster.

The protein belongs to the complex I 20 kDa subunit family. NDH-1 is composed of 14 different subunits. Subunits NuoB, C, D, E, F, and G constitute the peripheral sector of the complex. Requires [4Fe-4S] cluster as cofactor.

It is found in the cell membrane. It carries out the reaction a quinone + NADH + 5 H(+)(in) = a quinol + NAD(+) + 4 H(+)(out). Functionally, NDH-1 shuttles electrons from NADH, via FMN and iron-sulfur (Fe-S) centers, to quinones in the respiratory chain. The immediate electron acceptor for the enzyme in this species is believed to be a menaquinone. Couples the redox reaction to proton translocation (for every two electrons transferred, four hydrogen ions are translocated across the cytoplasmic membrane), and thus conserves the redox energy in a proton gradient. The sequence is that of NADH-quinone oxidoreductase subunit B from Anoxybacillus flavithermus (strain DSM 21510 / WK1).